Reading from the N-terminus, the 225-residue chain is 7-cyano-7-deazaguanine synthase (225 aa).

Residue 7 to 17 (LSGGMDSTTLL) coordinates ATP. Zn(2+)-binding residues include C183, C191, C194, and C197.

The protein belongs to the QueC family. In terms of assembly, homodimer. Zn(2+) is required as a cofactor.

It catalyses the reaction 7-carboxy-7-deazaguanine + NH4(+) + ATP = 7-cyano-7-deazaguanine + ADP + phosphate + H2O + H(+). The protein operates within purine metabolism; 7-cyano-7-deazaguanine biosynthesis. In terms of biological role, catalyzes the ATP-dependent conversion of 7-carboxy-7-deazaguanine (CDG) to 7-cyano-7-deazaguanine (preQ(0)). The protein is 7-cyano-7-deazaguanine synthase of Caldicellulosiruptor saccharolyticus (strain ATCC 43494 / DSM 8903 / Tp8T 6331).